Consider the following 154-residue polypeptide: 6,7-dimethyl-8-ribityllumazine synthase (154 aa).

5-amino-6-(D-ribitylamino)uracil-binding positions include phenylalanine 22, 56-58 (AFE), and 81-83 (VLI). Residue 86–87 (ET) coordinates (2S)-2-hydroxy-3-oxobutyl phosphate. The Proton donor role is filled by histidine 89. Leucine 114 is a 5-amino-6-(D-ribitylamino)uracil binding site. (2S)-2-hydroxy-3-oxobutyl phosphate is bound at residue arginine 128.

This sequence belongs to the DMRL synthase family.

It carries out the reaction (2S)-2-hydroxy-3-oxobutyl phosphate + 5-amino-6-(D-ribitylamino)uracil = 6,7-dimethyl-8-(1-D-ribityl)lumazine + phosphate + 2 H2O + H(+). It participates in cofactor biosynthesis; riboflavin biosynthesis; riboflavin from 2-hydroxy-3-oxobutyl phosphate and 5-amino-6-(D-ribitylamino)uracil: step 1/2. Its function is as follows. Catalyzes the formation of 6,7-dimethyl-8-ribityllumazine by condensation of 5-amino-6-(D-ribitylamino)uracil with 3,4-dihydroxy-2-butanone 4-phosphate. This is the penultimate step in the biosynthesis of riboflavin. This is 6,7-dimethyl-8-ribityllumazine synthase from Chlamydia pneumoniae (Chlamydophila pneumoniae).